Consider the following 215-residue polypeptide: Glutathione S-transferase D4 (215 aa).

The 80-residue stretch at 1 to 80 (MDFYYSPRSS…YLVEKYGKDD (80 aa)) folds into the GST N-terminal domain. Residues Ser-9, 50–52 (HTI), and 64–66 (ESR) each bind glutathione. The GST C-terminal domain occupies 86-207 (DPQKRALINQ…KGLLQMKTMY (122 aa)).

It belongs to the GST superfamily. Delta family. In terms of assembly, homodimer.

The enzyme catalyses RX + glutathione = an S-substituted glutathione + a halide anion + H(+). In terms of biological role, conjugation of reduced glutathione to a wide number of exogenous and endogenous hydrophobic electrophiles. May be involved in detoxification. In Drosophila melanogaster (Fruit fly), this protein is Glutathione S-transferase D4.